We begin with the raw amino-acid sequence, 380 residues long: Chaperone protein DnaJ (380 aa).

The J domain maps to 4-68; sequence DFYSVLGVSR…EKRRMYDQMG (65 aa). Over residues 27–87 the composition is skewed to basic and acidic residues; that stretch reads KASEYHPDVS…RGATDTDRGR (61 aa). The interval 27–126 is disordered; that stretch reads KASEYHPDVS…SRSGPRQGSD (100 aa). Over residues 88 to 100 the composition is skewed to gly residues; sequence GGMGGMGGGGMGG. The span at 115 to 124 shows a compositional bias: low complexity; it reads SQSRSGPRQG. The CR-type zinc-finger motif lies at 141–223; the sequence is GVTKQLTVTR…CRGDGQVRNE (83 aa). Residues C154, C157, C171, C174, C197, C200, C211, and C214 each coordinate Zn(2+). 4 CXXCXGXG motif repeats span residues 154–161, 171–178, 197–204, and 211–218; these read CPDCDGAG, CSACDGRG, CPQCDGKG, and CSTCRGDG.

This sequence belongs to the DnaJ family. Homodimer. The cofactor is Zn(2+).

It is found in the cytoplasm. Functionally, participates actively in the response to hyperosmotic and heat shock by preventing the aggregation of stress-denatured proteins and by disaggregating proteins, also in an autonomous, DnaK-independent fashion. Unfolded proteins bind initially to DnaJ; upon interaction with the DnaJ-bound protein, DnaK hydrolyzes its bound ATP, resulting in the formation of a stable complex. GrpE releases ADP from DnaK; ATP binding to DnaK triggers the release of the substrate protein, thus completing the reaction cycle. Several rounds of ATP-dependent interactions between DnaJ, DnaK and GrpE are required for fully efficient folding. Also involved, together with DnaK and GrpE, in the DNA replication of plasmids through activation of initiation proteins. This is Chaperone protein DnaJ from Natronomonas pharaonis (strain ATCC 35678 / DSM 2160 / CIP 103997 / JCM 8858 / NBRC 14720 / NCIMB 2260 / Gabara) (Halobacterium pharaonis).